Reading from the N-terminus, the 156-residue chain is Small ribosomal subunit protein uS7 (156 aa).

It belongs to the universal ribosomal protein uS7 family. Part of the 30S ribosomal subunit. Contacts proteins S9 and S11.

One of the primary rRNA binding proteins, it binds directly to 16S rRNA where it nucleates assembly of the head domain of the 30S subunit. Is located at the subunit interface close to the decoding center, probably blocks exit of the E-site tRNA. This is Small ribosomal subunit protein uS7 from Pseudomonas syringae pv. tomato (strain ATCC BAA-871 / DC3000).